The chain runs to 159 residues: uncharacterized protein (159 aa).

Belongs to the mimivirus L761/L899 family.

This is an uncharacterized protein from Acanthamoeba polyphaga mimivirus (APMV).